Consider the following 341-residue polypeptide: Ketol-acid reductoisomerase (NADP(+)) (341 aa).

Positions 2–182 (TDIVYDKDAD…GGLRAGGIRT (181 aa)) constitute a KARI N-terminal Rossmann domain. Residues 25–28 (YGSQ), Lys48, Ser51, Ser53, and 83–86 (DQHQ) each bind NADP(+). The active site involves His108. Gly134 serves as a coordination point for NADP(+). The 146-residue stretch at 183–328 (TFTEETETDL…RELRKLFAWN (146 aa)) folds into the KARI C-terminal knotted domain. Mg(2+)-binding residues include Asp191, Glu195, Glu227, and Glu231. Substrate is bound at residue Ser252.

Belongs to the ketol-acid reductoisomerase family. Requires Mg(2+) as cofactor.

It catalyses the reaction (2R)-2,3-dihydroxy-3-methylbutanoate + NADP(+) = (2S)-2-acetolactate + NADPH + H(+). The catalysed reaction is (2R,3R)-2,3-dihydroxy-3-methylpentanoate + NADP(+) = (S)-2-ethyl-2-hydroxy-3-oxobutanoate + NADPH + H(+). Its pathway is amino-acid biosynthesis; L-isoleucine biosynthesis; L-isoleucine from 2-oxobutanoate: step 2/4. It participates in amino-acid biosynthesis; L-valine biosynthesis; L-valine from pyruvate: step 2/4. Functionally, involved in the biosynthesis of branched-chain amino acids (BCAA). Catalyzes an alkyl-migration followed by a ketol-acid reduction of (S)-2-acetolactate (S2AL) to yield (R)-2,3-dihydroxy-isovalerate. In the isomerase reaction, S2AL is rearranged via a Mg-dependent methyl migration to produce 3-hydroxy-3-methyl-2-ketobutyrate (HMKB). In the reductase reaction, this 2-ketoacid undergoes a metal-dependent reduction by NADPH to yield (R)-2,3-dihydroxy-isovalerate. The sequence is that of Ketol-acid reductoisomerase (NADP(+)) from Clavibacter sepedonicus (Clavibacter michiganensis subsp. sepedonicus).